We begin with the raw amino-acid sequence, 433 residues long: ACT domain-containing protein ACR6 (433 aa).

4 consecutive ACT domains span residues 30 to 110 (VIQV…RSSV), 120 to 207 (SIEL…SCSD), 250 to 326 (VVTM…ASEG), and 328 to 402 (ELEL…VKKK).

Functionally, may bind amino acids. The sequence is that of ACT domain-containing protein ACR6 from Arabidopsis thaliana (Mouse-ear cress).